The primary structure comprises 105 residues: uncharacterized protein (105 aa).

Serine 2 is subject to N-acetylserine.

This is an uncharacterized protein from Saccharomyces cerevisiae (strain ATCC 204508 / S288c) (Baker's yeast).